The chain runs to 579 residues: MSDSSIVNLSKEGDSNFSSATINLSKVDDTVNVSNATINLSKVTIDPSNQMSNPSNQGINLSKCTKVELRFKCMNLKDMDTFSKSDPQIFVYEKKGNNNNNNNSKPILIGSTEMISNNLNPVFKKTVTIDYHFERIQNLKFEVLDIDGGGKNDTIGDFSITLGNIISKPGKKVIGEIKCNGKQTGTIEIIAEEIQETGQNIILKLQGSKLDKKDLFSSDPFFKIFKSSANGNLLVYQSPVIKSNINPIYNPIIFKLEEFNGGDMFRELTFEFWDYDTIGDNDFIGSFKTTTDEILKGQVREFTLINPKKLSKSSYKNSGKIVFTDARLIAQPTFIDYLSGGCEINLMIAIDCTASNGMPSDRTSLHYNTPTHESEYARSILAVGNVLAPYDSDGKIELLGFGAERFGGVTSHCFQFGPKAEARGIEEVLSTYNKVIPTIKLSYPTNFQEIIKHAHKKSIKGVDSKNQKYTILLILTDGEITDMEETIEEIVKASSKAPLSIVIVGVGIASFELMKKLDGDENQLSDKNGVIATRDIVQFVPFKKYENDPEQLAAETLCEIPEQLIGYMKSQNYFPNMKN.

C2 domains are found at residues 45-175 (IDPS…KVIG) and 183-304 (QTGT…EFTL). Asp-80, Asp-86, Asp-145, Asp-147, and Asp-153 together coordinate Ca(2+). The region spanning 345–552 (NLMIAIDCTA…KKYENDPEQL (208 aa)) is the VWFA domain.

This sequence belongs to the copine family. The cofactor is Ca(2+).

In Dictyostelium discoideum (Social amoeba), this protein is Copine-E (cpnE).